The sequence spans 275 residues: 3-oxo-isoapionate decarboxylase (275 aa).

It catalyses the reaction 3-oxoisoapionate + H(+) = L-erythrulose + CO2. It functions in the pathway carbohydrate metabolism. In terms of biological role, involved in catabolism of D-apiose. Catalyzes decarboxylation of 3-oxo-isoapionate to L-erythrulose. The chain is 3-oxo-isoapionate decarboxylase from Pectobacterium atrosepticum (strain SCRI 1043 / ATCC BAA-672) (Erwinia carotovora subsp. atroseptica).